A 1388-amino-acid chain; its full sequence is DNA-directed RNA polymerase subunit beta (1388 aa).

Belongs to the RNA polymerase beta chain family. As to quaternary structure, the RNAP catalytic core consists of 2 alpha, 1 beta, 1 beta' and 1 omega subunit. When a sigma factor is associated with the core the holoenzyme is formed, which can initiate transcription.

It carries out the reaction RNA(n) + a ribonucleoside 5'-triphosphate = RNA(n+1) + diphosphate. In terms of biological role, DNA-dependent RNA polymerase catalyzes the transcription of DNA into RNA using the four ribonucleoside triphosphates as substrates. The polypeptide is DNA-directed RNA polymerase subunit beta (Xylella fastidiosa (strain Temecula1 / ATCC 700964)).